The chain runs to 217 residues: Uracil-DNA glycosylase (217 aa).

Asp-62 serves as the catalytic Proton acceptor.

The protein belongs to the uracil-DNA glycosylase (UDG) superfamily. UNG family.

It localises to the cytoplasm. The enzyme catalyses Hydrolyzes single-stranded DNA or mismatched double-stranded DNA and polynucleotides, releasing free uracil.. Its function is as follows. Excises uracil residues from the DNA which can arise as a result of misincorporation of dUMP residues by DNA polymerase or due to deamination of cytosine. The sequence is that of Uracil-DNA glycosylase from Streptococcus equi subsp. zooepidemicus (strain MGCS10565).